A 231-amino-acid chain; its full sequence is Putative histone H1.9 (231 aa).

Positions 113 to 177 (QKPSTSKVIL…GSAGSFTLGK (65 aa)) constitute an H15 domain. Position 135 is a phosphoserine (Ser-135). Residues 177–214 (KKQASKSKLKVKRQRQQRWRSGQRPFGQHRSLLGSKQG) form a disordered region. Over residues 179–194 (QASKSKLKVKRQRQQR) the composition is skewed to basic residues.

It belongs to the histone H1/H5 family. In terms of tissue distribution, expressed exclusively in the testis.

The protein localises to the nucleus. Its subcellular location is the chromosome. In terms of biological role, DNA-binding protein that may be implicated in chromatin remodeling and/or transcriptional regulation during spermiogenesis, the process of spermatid maturation into spermatozoa. The sequence is that of Putative histone H1.9 from Homo sapiens (Human).